The primary structure comprises 498 residues: ATP synthase subunit beta, chloroplastic (498 aa).

Residue 172–179 coordinates ATP; the sequence is GGAGVGKT.

It belongs to the ATPase alpha/beta chains family. In terms of assembly, F-type ATPases have 2 components, CF(1) - the catalytic core - and CF(0) - the membrane proton channel. CF(1) has five subunits: alpha(3), beta(3), gamma(1), delta(1), epsilon(1). CF(0) has four main subunits: a(1), b(1), b'(1) and c(9-12).

The protein localises to the plastid. It localises to the chloroplast thylakoid membrane. It carries out the reaction ATP + H2O + 4 H(+)(in) = ADP + phosphate + 5 H(+)(out). In terms of biological role, produces ATP from ADP in the presence of a proton gradient across the membrane. The catalytic sites are hosted primarily by the beta subunits. This Elaeis oleifera (American oil palm) protein is ATP synthase subunit beta, chloroplastic.